We begin with the raw amino-acid sequence, 104 residues long: Large ribosomal subunit protein uL24 (104 aa).

The protein belongs to the universal ribosomal protein uL24 family. In terms of assembly, part of the 50S ribosomal subunit.

In terms of biological role, one of two assembly initiator proteins, it binds directly to the 5'-end of the 23S rRNA, where it nucleates assembly of the 50S subunit. One of the proteins that surrounds the polypeptide exit tunnel on the outside of the subunit. This Chelativorans sp. (strain BNC1) protein is Large ribosomal subunit protein uL24.